The following is a 1479-amino-acid chain: C-type mannose receptor 2 (1479 aa).

Residues 1–30 (MGPGRPAPAPWPRHLLRCVLLLGCLHLGRP) form the signal peptide. Residues 31–1414 (GAPGDAALPE…PSALPENPAA (1384 aa)) are Extracellular-facing. One can recognise a Ricin B-type lectin domain in the interval 41-167 (PNVFLIFSHG…WRIYGSEEDL (127 aa)). A disulfide bridge connects residues C54 and C68. N-linked (GlcNAc...) (complex) asparagine glycosylation occurs at N69. The cysteines at positions 93 and 112 are disulfide-linked. N-linked (GlcNAc...) asparagine glycosylation occurs at N140. Residues 182 to 230 (SHGKPCTIPFKYDNQWFHGCTSTGREDGHLWCATTQDYGKDERWGFCPI) form the Fibronectin type-II domain. 4 disulfides stabilise this stretch: C187–C213, C201–C228, C266–C359, and C335–C351. In terms of domain architecture, C-type lectin 1 spans 244–360 (LTDSCYQFNF…CSIALPYVCK (117 aa)). Residue N364 is glycosylated (N-linked (GlcNAc...) asparagine). 4 C-type lectin domains span residues 389–505 (FQGH…SICK), 528–644 (HSPS…RYIC), 678–809 (KLRY…WICK), and 832–951 (FQEA…YICK). 2 disulfides stabilise this stretch: C410–C504 and C481–C496. N-linked (GlcNAc...) asparagine glycosylation is present at N588. Cystine bridges form between C618/C635, C704/C808, C785/C800, C853/C950, and C927/C942. N-linked (GlcNAc...) asparagine glycosylation is found at N954 and N1029. C-type lectin domains lie at 979 to 1107 (FLNK…GFIC), 1132 to 1243 (YLNG…GAVC), and 1273 to 1393 (FREH…GVVC). Cysteines 1078 and 1098 form a disulfide. K1142 is covalently cross-linked (Glycyl lysine isopeptide (Lys-Gly) (interchain with G-Cter in SUMO1)). C1220 and C1234 are oxidised to a cystine. N-linked (GlcNAc...) asparagine glycosylation is present at N1350. The cysteines at positions 1369 and 1384 are disulfide-linked. Residues 1415–1435 (LVVVLMAVLLLLALLTAALIL) traverse the membrane as a helical segment. Topologically, residues 1436-1479 (YRRRQSIERGAFEGARYSRSSSSPTEATEKNILVSDMEMNEQQE) are cytoplasmic. Positions 1450–1479 (ARYSRSSSSPTEATEKNILVSDMEMNEQQE) are disordered.

Interacts with C-terminal region of type I collagen/COL1A1. Interacts directly with PLAUR/UPAR and PLAU/pro-UPA to form a tri-molecular complex. Interacts with collagen V. N-glycosylated. In terms of tissue distribution, ubiquitous with low expression in brain, placenta, lung, kidney, pancreas, spleen, thymus and colon. Expressed in endothelial cells, fibroblasts and macrophages. Highly expressed in fetal lung and kidney.

The protein localises to the membrane. Its function is as follows. May play a role as endocytotic lectin receptor displaying calcium-dependent lectin activity. Internalizes glycosylated ligands from the extracellular space for release in an endosomal compartment via clathrin-mediated endocytosis. May be involved in plasminogen activation system controlling the extracellular level of PLAUR/PLAU, and thus may regulate protease activity at the cell surface. May contribute to cellular uptake, remodeling and degradation of extracellular collagen matrices. May play a role during cancer progression as well as in other chronic tissue destructive diseases acting on collagen turnover. May participate in remodeling of extracellular matrix cooperating with the matrix metalloproteinases (MMPs). This chain is C-type mannose receptor 2 (MRC2), found in Homo sapiens (Human).